A 622-amino-acid polypeptide reads, in one-letter code: Dehydrogenase xptC (622 aa).

A signal peptide spans 1 to 18 (MAKLSVILLFRSLLLCGA). Residues 47 to 48 (VS), 68 to 69 (EA), and 123 to 126 (NAMI) contribute to the FAD site. N-linked (GlcNAc...) asparagine glycosylation is found at N160, N173, N357, N364, and N480. 598 to 599 (PM) lines the FAD pocket.

It belongs to the GMC oxidoreductase family. Homodimer. The cofactor is FAD.

It functions in the pathway secondary metabolite biosynthesis. Functionally, dehydrogenase involved in the conversion of monodictyphenone to the prenyl xanthones such as emericellin, shamixanthone and epishamixanthone. Monodictyphenone is first converted to variecoxanthone A via a paeciloxanthone intermediate by the consecutive actions of the FAD-dependent monooxygenase mdpD and the xanthone prenyltransferase xptB. XptB catalyzes regular O-prenylation at the hydroxy group of C-7 of the xanthone ring. Variecoxanthone A is further prenylated to emericellin by xptA before being reduced to shamixanthone and epishamixanthone by the dehydrogenase xptC. This Emericella nidulans (strain FGSC A4 / ATCC 38163 / CBS 112.46 / NRRL 194 / M139) (Aspergillus nidulans) protein is Dehydrogenase xptC.